The chain runs to 518 residues: G1/S-specific cyclin-E (518 aa).

A disordered region spans residues 1-193; the sequence is MAGRKSSRTT…DEETEDEFDL (193 aa). The segment covering 13–46 has biased composition (basic and acidic residues); that stretch reads PVKKAERKSAILSPHDELRERLLETSLDVKENIP. Polar residues predominate over residues 47–62; the sequence is ERSSSTRNESVGSQRS. Basic and acidic residues predominate over residues 82 to 107; sequence PSTEKKGNGSRDDSFSSVFSEDRETE. Residues 108-119 are compositionally biased toward low complexity; that stretch reads SSVGSTSSRTRG. A compositionally biased stretch (basic and acidic residues) spans 135–154; sequence SSDHNAESEESRETPQSDEH. A compositionally biased stretch (acidic residues) spans 155–192; sequence DGFEEDGDVEDDVSSDVNDEEDEYDEYEEDEETEDEFD.

Belongs to the cyclin family. Cyclin E subfamily. Interacts with a member of the CDK2/CDK protein kinases to form a serine/threonine kinase holoenzyme complex. The cyclin subunit imparts substrate specificity to the complex.

Its subcellular location is the nucleus. It localises to the cytoplasm. The protein localises to the cytoskeleton. It is found in the microtubule organizing center. The protein resides in the centrosome. Its subcellular location is the centriole. Its function is as follows. Essential for the control of the cell cycle at the G1/S (start) transition. In association with cdk-2, regulates proliferation, quiescent state and cell fate during the development of several cell lineages. In the embryo, initiates the establishment of cell polarity through the recruitment of the centrosomal proteins spd-2 and spd-5 during prophase. During the development of the vulva, controls the onset of vulval cell terminal differentiation by controlling the duration of G1 phase. During hypoderm development at early larval stages, controls syncytial fate of seam cell daughter cells. Involved in the progression of cell division in the intestinal lineage in larvae, and in particular in endoreplication, a specific growth pathway in the intestinal epithelium, required for feeding and gut development in growing larvae. By controlling the activity of translational repressor gld-1, regulates the pool of germline stem cells and the size of the mitotic zone by preventing entry into meiosis. In addition, repression of expression by gld-1 prevents mitosis re-entry in meiotic germline cells. In Caenorhabditis briggsae, this protein is G1/S-specific cyclin-E (cye-1).